Consider the following 219-residue polypeptide: Flagellar transcriptional regulator FlhC (219 aa).

Residues Cys137, Cys140, Cys157, and Cys160 each coordinate Zn(2+).

Belongs to the FlhC family. Heterohexamer composed of two FlhC and four FlhD subunits. Each FlhC binds a FlhD dimer, forming a heterotrimer, and a hexamer assembles by dimerization of two heterotrimers. The cofactor is Zn(2+).

It localises to the cytoplasm. Its function is as follows. Functions in complex with FlhD as a master transcriptional regulator that regulates transcription of several flagellar and non-flagellar operons by binding to their promoter region. Activates expression of class 2 flagellar genes, including fliA, which is a flagellum-specific sigma factor that turns on the class 3 genes. Also regulates genes whose products function in a variety of physiological pathways. The sequence is that of Flagellar transcriptional regulator FlhC from Paraburkholderia phymatum (strain DSM 17167 / CIP 108236 / LMG 21445 / STM815) (Burkholderia phymatum).